A 962-amino-acid chain; its full sequence is Putative RNA Helicase B962L (962 aa).

The 187-residue stretch at 43-229 (IPTSLADRVL…FGIGKENIIL (187 aa)) folds into the Helicase ATP-binding domain. An ATP-binding site is contributed by 56–63 (SRTGSGKS). The short motif at 167-170 (DEAH) is the DEAH box element. Residues 253 to 459 (ACETALTIHK…TIKKNKEGVF (207 aa)) enclose the Helicase C-terminal domain. Residues 521 to 541 (GYFWQAAISDIATILAVVSVA) form a helical membrane-spanning segment.

Belongs to the DEAD box helicase family. DEAH subfamily.

It is found in the host membrane. It localises to the virion. The enzyme catalyses ATP + H2O = ADP + phosphate + H(+). The polypeptide is Putative RNA Helicase B962L (African swine fever virus (isolate Tick/South Africa/Pretoriuskop Pr4/1996) (ASFV)).